Reading from the N-terminus, the 482-residue chain is ATP synthase subunit beta (482 aa).

Residue 168-175 (GGAGVGKT) participates in ATP binding.

It belongs to the ATPase alpha/beta chains family. In terms of assembly, F-type ATPases have 2 components, CF(1) - the catalytic core - and CF(0) - the membrane proton channel. CF(1) has five subunits: alpha(3), beta(3), gamma(1), delta(1), epsilon(1). CF(0) has three main subunits: a(1), b(2) and c(9-12). The alpha and beta chains form an alternating ring which encloses part of the gamma chain. CF(1) is attached to CF(0) by a central stalk formed by the gamma and epsilon chains, while a peripheral stalk is formed by the delta and b chains.

The protein localises to the cell membrane. It carries out the reaction ATP + H2O + 4 H(+)(in) = ADP + phosphate + 5 H(+)(out). Its function is as follows. Produces ATP from ADP in the presence of a proton gradient across the membrane. The catalytic sites are hosted primarily by the beta subunits. The chain is ATP synthase subunit beta from Nocardia farcinica (strain IFM 10152).